We begin with the raw amino-acid sequence, 140 residues long: ATP synthase epsilon chain (140 aa).

Belongs to the ATPase epsilon chain family. F-type ATPases have 2 components, CF(1) - the catalytic core - and CF(0) - the membrane proton channel. CF(1) has five subunits: alpha(3), beta(3), gamma(1), delta(1), epsilon(1). CF(0) has three main subunits: a, b and c.

It localises to the cell inner membrane. Its function is as follows. Produces ATP from ADP in the presence of a proton gradient across the membrane. The chain is ATP synthase epsilon chain from Herminiimonas arsenicoxydans.